Consider the following 300-residue polypeptide: Acetylglutamate kinase (300 aa).

Residues 73–74 (GG), R95, and N197 each bind substrate.

This sequence belongs to the acetylglutamate kinase family. ArgB subfamily.

The protein resides in the cytoplasm. The enzyme catalyses N-acetyl-L-glutamate + ATP = N-acetyl-L-glutamyl 5-phosphate + ADP. It participates in amino-acid biosynthesis; L-arginine biosynthesis; N(2)-acetyl-L-ornithine from L-glutamate: step 2/4. Catalyzes the ATP-dependent phosphorylation of N-acetyl-L-glutamate. This is Acetylglutamate kinase from Polynucleobacter necessarius subsp. necessarius (strain STIR1).